A 276-amino-acid polypeptide reads, in one-letter code: uncharacterized protein (276 aa).

This is an uncharacterized protein from Fowl adenovirus A serotype 1 (strain CELO / Phelps) (FAdV-1).